The following is a 306-amino-acid chain: Oxygen-dependent coproporphyrinogen-III oxidase (306 aa).

Ser-99 is a substrate binding site. Positions 103 and 113 each coordinate a divalent metal cation. His-113 acts as the Proton donor in catalysis. Residue 115-117 (NVR) participates in substrate binding. Residues His-152 and His-182 each coordinate a divalent metal cation. The important for dimerization stretch occupies residues 247 to 282 (YVEFNLVFDRGTLFGLQSGGRTESILMSMPPVANWR). Position 265–267 (265–267 (GGR)) interacts with substrate.

Belongs to the aerobic coproporphyrinogen-III oxidase family. In terms of assembly, homodimer. A divalent metal cation serves as cofactor.

Its subcellular location is the cytoplasm. The catalysed reaction is coproporphyrinogen III + O2 + 2 H(+) = protoporphyrinogen IX + 2 CO2 + 2 H2O. The protein operates within porphyrin-containing compound metabolism; protoporphyrin-IX biosynthesis; protoporphyrinogen-IX from coproporphyrinogen-III (O2 route): step 1/1. Involved in the heme biosynthesis. Catalyzes the aerobic oxidative decarboxylation of propionate groups of rings A and B of coproporphyrinogen-III to yield the vinyl groups in protoporphyrinogen-IX. The polypeptide is Oxygen-dependent coproporphyrinogen-III oxidase (Burkholderia ambifaria (strain MC40-6)).